We begin with the raw amino-acid sequence, 162 residues long: Ribonuclease P protein component (162 aa).

The interval 1-62 (MDEKDLATQP…GPPKAGGRLL (62 aa)) is disordered. The span at 21-36 (GPHEDPRRQERAEAQA) shows a compositional bias: basic and acidic residues.

This sequence belongs to the RnpA family. Consists of a catalytic RNA component (M1 or rnpB) and a protein subunit.

It carries out the reaction Endonucleolytic cleavage of RNA, removing 5'-extranucleotides from tRNA precursor.. Functionally, RNaseP catalyzes the removal of the 5'-leader sequence from pre-tRNA to produce the mature 5'-terminus. It can also cleave other RNA substrates such as 4.5S RNA. The protein component plays an auxiliary but essential role in vivo by binding to the 5'-leader sequence and broadening the substrate specificity of the ribozyme. The protein is Ribonuclease P protein component of Thermus aquaticus.